A 107-amino-acid chain; its full sequence is Large ribosomal subunit protein uL24 (107 aa).

It belongs to the universal ribosomal protein uL24 family. Part of the 50S ribosomal subunit.

In terms of biological role, one of two assembly initiator proteins, it binds directly to the 5'-end of the 23S rRNA, where it nucleates assembly of the 50S subunit. Its function is as follows. One of the proteins that surrounds the polypeptide exit tunnel on the outside of the subunit. The chain is Large ribosomal subunit protein uL24 from Thiobacillus denitrificans (strain ATCC 25259 / T1).